The following is a 435-amino-acid chain: Elongation factor 1-alpha (435 aa).

The tr-type G domain maps to 4-227; sequence KPHLNLIVIG…YLDQLELPPK (224 aa). The tract at residues 13–20 is G1; sequence GHIDHGKS. 13–20 is a GTP binding site; that stretch reads GHIDHGKS. Mg(2+) is bound at residue Ser20. Positions 69–73 are G2; it reads GVTIN. Positions 90 to 93 are G3; it reads DAPG. Residues 90–94 and 152–155 contribute to the GTP site; these read DAPGH and NKMD. Residues 152–155 are G4; the sequence is NKMD. Residues 193–195 form a G5 region; that stretch reads VAP.

Belongs to the TRAFAC class translation factor GTPase superfamily. Classic translation factor GTPase family. EF-Tu/EF-1A subfamily.

Its subcellular location is the cytoplasm. The enzyme catalyses GTP + H2O = GDP + phosphate + H(+). Its function is as follows. GTP hydrolase that promotes the GTP-dependent binding of aminoacyl-tRNA to the A-site of ribosomes during protein biosynthesis. The chain is Elongation factor 1-alpha from Saccharolobus solfataricus (strain ATCC 35092 / DSM 1617 / JCM 11322 / P2) (Sulfolobus solfataricus).